Consider the following 611-residue polypeptide: Elongation factor 4 1 (611 aa).

Residues 11-193 enclose the tr-type G domain; the sequence is QHIRNFSIVA…QIVHKIPAPQ (183 aa). GTP-binding positions include 23–28 and 140–143; these read DHGKST and NKID.

It belongs to the TRAFAC class translation factor GTPase superfamily. Classic translation factor GTPase family. LepA subfamily.

It localises to the cell membrane. The catalysed reaction is GTP + H2O = GDP + phosphate + H(+). Functionally, required for accurate and efficient protein synthesis under certain stress conditions. May act as a fidelity factor of the translation reaction, by catalyzing a one-codon backward translocation of tRNAs on improperly translocated ribosomes. Back-translocation proceeds from a post-translocation (POST) complex to a pre-translocation (PRE) complex, thus giving elongation factor G a second chance to translocate the tRNAs correctly. Binds to ribosomes in a GTP-dependent manner. This is Elongation factor 4 1 from Lactiplantibacillus plantarum (strain ATCC BAA-793 / NCIMB 8826 / WCFS1) (Lactobacillus plantarum).